A 396-amino-acid polypeptide reads, in one-letter code: Aspartate aminotransferase (396 aa).

3 residues coordinate L-aspartate: Gly34, Trp130, and Asn183. Position 246 is an N6-(pyridoxal phosphate)lysine (Lys246). L-aspartate is bound at residue Arg374.

This sequence belongs to the class-I pyridoxal-phosphate-dependent aminotransferase family. In terms of assembly, homodimer. Pyridoxal 5'-phosphate is required as a cofactor.

The protein resides in the cytoplasm. The enzyme catalyses L-aspartate + 2-oxoglutarate = oxaloacetate + L-glutamate. In Haemophilus influenzae (strain ATCC 51907 / DSM 11121 / KW20 / Rd), this protein is Aspartate aminotransferase (aspC).